Here is a 550-residue protein sequence, read N- to C-terminus: Sterol O-acyltransferase 1 (550 aa).

At methionine 1 the chain carries N-acetylmethionine. The disordered stretch occupies residues 1 to 36; sequence MVGEEKMSLRNRLSKSRENPEEDEDQRKPAKESLEA. The Cytoplasmic segment spans residues 1-138; sequence MVGEEKMSLR…LDELLEVDHI (138 aa). At serine 8 the chain carries Phosphoserine. A compositionally biased stretch (basic and acidic residues) spans 15–34; it reads KSRENPEEDEDQRKPAKESL. A cholesterol-binding site is contributed by histidine 137. The helical transmembrane segment at 139 to 160 threads the bilayer; that stretch reads RTIYHMFIALLILFILSTLVVD. Residues 161-180 lie on the Lumenal side of the membrane; the sequence is YIDEGRLVLEFSLLSYAFGK. Residues 181-206 traverse the membrane as a helical segment; it reads FPTVVWTWWIMFLSTFSVPYFLFQRW. Residues 207-218 lie on the Cytoplasmic side of the membrane; sequence ATGYSKSSHPLI. The helical transmembrane segment at 219 to 244 threads the bilayer; sequence NSLFHGFLFMVFQIGILGFGPTYVVL. Residues 245 to 252 are Lumenal-facing; the sequence is AYTLPPAS. Residues 253–276 form a helical membrane-spanning segment; that stretch reads RFIIIFEQIRFVMKAHSFVRENVP. Residues 277 to 319 are Cytoplasmic-facing; it reads RVLNSAKEKSSTVPIPTVNQYLYFLFAPTLIYRDSYPRNPTVR. A helical membrane pass occupies residues 320–352; the sequence is WGYVAMQFAQVFGCFFYVYYIFERLCAPLFRNI. Residues 353 to 369 are Lumenal-facing; sequence KQEPFSARVLVLCVFNS. Residues 370–395 form a helical membrane-spanning segment; the sequence is ILPGVLILFLTFFAFLHCWLNAFAEM. Topologically, residues 396 to 443 are cytoplasmic; that stretch reads LRFGDRMFYKDWWNSTSYSNYYRTWNVVVHDWLYYYAYKDFLWFFSKR. Positions 403–409 match the FYXDWWN motif motif; that stretch reads FYKDWWN. An acyl-CoA is bound by residues asparagine 415, arginine 418, asparagine 421, histidine 425, tyrosine 433, lysine 445, and serine 456. The chain crosses the membrane as a helical span at residues 444-468; that stretch reads FKSAAMLAVFAVSAVVHEYALAVCL. Histidine 460 is a catalytic residue. The Lumenal portion of the chain corresponds to 469 to 474; that stretch reads SFFYPV. The helical transmembrane segment at 475–490 threads the bilayer; it reads LFVLFMFFGMAFNFIV. Residues 491-496 are Cytoplasmic-facing; that stretch reads NDSRKK. A helical membrane pass occupies residues 497-528; sequence PIWNVMMWTSLFLGNGVLLCFYSQEWYARQHC. A disulfide bond links cysteine 528 and cysteine 546. Residues 529–550 lie on the Lumenal side of the membrane; sequence PLKNPTFLDYVRPRSWTCRYVF.

This sequence belongs to the membrane-bound acyltransferase family. Sterol o-acyltransferase subfamily. In terms of assembly, may form homo- or heterodimers. Interacts with UBIAD1. In terms of tissue distribution, expressed in most tissues, but most strongly in the adrenal gland. Expressed more strongly in liver Kupffer cells than in hepatocytes.

Its subcellular location is the endoplasmic reticulum membrane. The catalysed reaction is a sterol + a long-chain fatty acyl-CoA = a long-chain 3-hydroxysterol ester + CoA. It catalyses the reaction cholesterol + an acyl-CoA = a cholesterol ester + CoA. It carries out the reaction cholesterol + (9Z)-octadecenoyl-CoA = cholesteryl (9Z-octadecenoate) + CoA. The enzyme catalyses cholesterol + hexadecanoyl-CoA = cholesteryl hexadecanoate + CoA. The catalysed reaction is octadecanoyl-CoA + cholesterol = cholesteryl octadecanoate + CoA. It catalyses the reaction (9Z,12Z)-octadecadienoyl-CoA + cholesterol = cholesteryl (9Z,12Z)-octadecadienoate + CoA. It carries out the reaction (5Z,8Z,11Z,14Z)-eicosatetraenoyl-CoA + cholesterol = cholesteryl (5Z,8Z,11Z,14Z)-eicosatetraenoate + CoA. The enzyme catalyses (9Z)-hexadecenoyl-CoA + cholesterol = cholesteryl (9Z)-hexadecenoate + CoA. The catalysed reaction is (11Z)-octadecenoyl-CoA + cholesterol = cholesteryl (11Z)-octadecenoate + CoA. It catalyses the reaction (7Z)-octadecenoyl-CoA + cholesterol = cholesteryl (7Z)-octadecenoate + CoA. Functionally, catalyzes the formation of fatty acid-cholesterol esters, which are less soluble in membranes than cholesterol. Plays a role in lipoprotein assembly and dietary cholesterol absorption. Preferentially utilizes oleoyl-CoA ((9Z)-octadecenoyl-CoA) as a substrate: shows a higher activity towards an acyl-CoA substrate with a double bond at the delta-9 position (9Z) than towards saturated acyl-CoA or an unsaturated acyl-CoA with a double bond at the delta-7 (7Z) or delta-11 (11Z) positions. This is Sterol O-acyltransferase 1 (SOAT1) from Chlorocebus aethiops (Green monkey).